The sequence spans 228 residues: Phosphoglycolate phosphatase 1 (228 aa).

The active-site Nucleophile is the D8. Mg(2+) is bound by residues D8 and D10. K149 contributes to the substrate binding site. Mg(2+)-binding residues include D172 and D176.

The protein belongs to the archaeal SPP-like hydrolase family. Mg(2+) is required as a cofactor.

The enzyme catalyses 2-phosphoglycolate + H2O = glycolate + phosphate. Functionally, catalyzes the dephosphorylation of 2-phosphoglycolate. This chain is Phosphoglycolate phosphatase 1, found in Saccharolobus solfataricus (strain ATCC 35092 / DSM 1617 / JCM 11322 / P2) (Sulfolobus solfataricus).